Consider the following 235-residue polypeptide: Urease accessory protein UreF (235 aa).

This sequence belongs to the UreF family. In terms of assembly, ureD, UreF and UreG form a complex that acts as a GTP-hydrolysis-dependent molecular chaperone, activating the urease apoprotein by helping to assemble the nickel containing metallocenter of UreC. The UreE protein probably delivers the nickel.

The protein resides in the cytoplasm. In terms of biological role, required for maturation of urease via the functional incorporation of the urease nickel metallocenter. The protein is Urease accessory protein UreF of Haemophilus influenzae (strain ATCC 51907 / DSM 11121 / KW20 / Rd).